The chain runs to 1008 residues: MSFYNPYLVKRTFLKKAAPSRPTKEYTRIIPKCFKTPGAAGVVPHTSTLDPVCFVGDKETPILYGDGSRSLWSAGGRGGPGTGAGQGHTPVALTFHVYDIIETVYGQDRCDHVPFQFQTDIIPSGTVLKLLGRTSDDRSVCVNVFRQELYFYVRVPEGLKLDFLIQQCSRENFNFSQGRYRYEKTSKRVLREYCVEAREVYRVFASSQGFVDLLAGGLTAAGCEVFETNVDAARRFIIDNGFSTFGWYSCAAAVPRQGGAARDSWTELEYDCAAGDLEFHAGRADWPGYNVLSFDIECLGENGFPNASRDEDMILQISCVIWKAGSGEAPRSVLLNLGTCEEIEGVEVYQCPSELDLLYLFFTMIRDADVEFVTGYNISNFDFPYVIDRATQVYNLNLKEFTRVRSSSIFEVHKPKNSSAGFMRAVSKVKVAGVVPIDMYQVCRDKLSLSNYKLDTVAGECVGAKKEDVSYKEIPHLFRQGPGGRARLGLYCVKDSALVLDLLRYFMTHVEISEIAKIAKIPTRRVLTDGQQIRVFSCLLDVAGREGYILPVDRHADAEGYQGATVIDPSPGFYNTPVLVVDFASLYPTIIQAHNLCYSTMIPGDRLCLHPHLGPGDYETFELASGPVHFVKKHKAVSLLATLLNVWLAKRKAIRRELATVSDEAVRTILDKQQLAIKVTCNAVYGFTGVASGILPCLKIAETVTFQGRRMLENSKRYIEGVTPEGLADILGRRVECAPDASFKVIYGDTDSLFIHCRGYRPEQVTGFCDELAAHMTRTLFVDPIKLEAEKTFKCLILLTKKRYIGMMTTDRLLMKGVDLVRKTACRFVQETTKAILDLVMGDEAVRAAAERLCAMRVEEVCARGPPVGFLKVVDILNDSYRKLRLNRVPVGQLSFSTELSRPISYYKTLTLPHLVVYHKIMQRNEELPQIHDRIAYVFVQSPKGKLRSEMAEDPAYAAQHNIPPAVDLYFDKVIHGAANILQCLFENDSDKAARVLYNFADLPPDDL.

It belongs to the DNA polymerase type-B family.

The protein localises to the host nucleus. It carries out the reaction DNA(n) + a 2'-deoxyribonucleoside 5'-triphosphate = DNA(n+1) + diphosphate. This Equine herpesvirus 2 (strain 86/87) (EHV-2) protein is DNA polymerase catalytic subunit (9).